Consider the following 341-residue polypeptide: Anthranilate phosphoribosyltransferase (341 aa).

Residues glycine 80, 83 to 84, threonine 88, 90 to 93, 108 to 116, and serine 120 each bind 5-phospho-alpha-D-ribose 1-diphosphate; these read GD, NIST, and KHGNRSVSS. Glycine 80 serves as a coordination point for anthranilate. Serine 92 provides a ligand contact to Mg(2+). Asparagine 111 is a binding site for anthranilate. Anthranilate is bound at residue arginine 166. The Mg(2+) site is built by aspartate 225 and glutamate 226.

It belongs to the anthranilate phosphoribosyltransferase family. As to quaternary structure, homodimer. Mg(2+) is required as a cofactor.

The catalysed reaction is N-(5-phospho-beta-D-ribosyl)anthranilate + diphosphate = 5-phospho-alpha-D-ribose 1-diphosphate + anthranilate. It functions in the pathway amino-acid biosynthesis; L-tryptophan biosynthesis; L-tryptophan from chorismate: step 2/5. Catalyzes the transfer of the phosphoribosyl group of 5-phosphorylribose-1-pyrophosphate (PRPP) to anthranilate to yield N-(5'-phosphoribosyl)-anthranilate (PRA). This Shouchella clausii (strain KSM-K16) (Alkalihalobacillus clausii) protein is Anthranilate phosphoribosyltransferase.